Reading from the N-terminus, the 147-residue chain is 3-hydroxyacyl-[acyl-carrier-protein] dehydratase FabZ (147 aa).

The active site involves His-46.

This sequence belongs to the thioester dehydratase family. FabZ subfamily.

It is found in the cytoplasm. It catalyses the reaction a (3R)-hydroxyacyl-[ACP] = a (2E)-enoyl-[ACP] + H2O. Involved in unsaturated fatty acids biosynthesis. Catalyzes the dehydration of short chain beta-hydroxyacyl-ACPs and long chain saturated and unsaturated beta-hydroxyacyl-ACPs. In Syntrophobacter fumaroxidans (strain DSM 10017 / MPOB), this protein is 3-hydroxyacyl-[acyl-carrier-protein] dehydratase FabZ.